A 413-amino-acid chain; its full sequence is Snake venom metalloproteinase AaPA (413 aa).

An N-terminal signal peptide occupies residues 1 to 20 (MIQVLLVTICLAAFPYQGSS). Residues 21–189 (IILESGKVND…KKASQLIVST (169 aa)) constitute a propeptide that is removed on maturation. Residues 193–390 (RYMEIVIVVD…ENPPCILNKP (198 aa)) form the Peptidase M12B domain. Residues glutamate 196 and aspartate 280 each contribute to the Ca(2+) site. Disulfide bonds link cysteine 304-cysteine 385, cysteine 344-cysteine 369, and cysteine 346-cysteine 352. Residue histidine 329 participates in Zn(2+) binding. Glutamate 330 is a catalytic residue. Positions 333 and 339 each coordinate Zn(2+). Residues cysteine 385, asparagine 388, valine 400, asparagine 403, leucine 405, glutamate 407, and aspartate 413 each coordinate Ca(2+). Positions 391–413 (LRTDTVSTPVSGNELLEAEKDYD) are excised as a propeptide.

Belongs to the venom metalloproteinase (M12B) family. P-I subfamily. In terms of assembly, monomer. Requires Zn(2+) as cofactor. In terms of tissue distribution, expressed by the venom gland.

It is found in the secreted. Its function is as follows. Snake venom zinc metalloprotease that may activate prothrombin. The sequence is that of Snake venom metalloproteinase AaPA from Deinagkistrodon acutus (Hundred-pace snake).